The primary structure comprises 471 residues: Eukaryotic translation initiation factor 3 subunit L (471 aa).

The 195-residue stretch at D252–L446 folds into the PCI domain.

It belongs to the eIF-3 subunit L family.

The protein resides in the cytoplasm. Component of the eukaryotic translation initiation factor 3 (eIF-3) complex, which is involved in protein synthesis of a specialized repertoire of mRNAs and, together with other initiation factors, stimulates binding of mRNA and methionyl-tRNAi to the 40S ribosome. The eIF-3 complex specifically targets and initiates translation of a subset of mRNAs involved in cell proliferation. The polypeptide is Eukaryotic translation initiation factor 3 subunit L (Pyricularia oryzae (strain Y34) (Rice blast fungus)).